The following is a 424-amino-acid chain: Histidine--tRNA ligase (424 aa).

Belongs to the class-II aminoacyl-tRNA synthetase family. Homodimer.

It localises to the cytoplasm. It catalyses the reaction tRNA(His) + L-histidine + ATP = L-histidyl-tRNA(His) + AMP + diphosphate + H(+). This is Histidine--tRNA ligase from Escherichia coli (strain SE11).